A 481-amino-acid polypeptide reads, in one-letter code: Glutamyl-tRNA(Gln) amidotransferase subunit A (481 aa).

Catalysis depends on charge relay system residues K74 and S149. Residue S173 is the Acyl-ester intermediate of the active site.

This sequence belongs to the amidase family. GatA subfamily. In terms of assembly, heterotrimer of A, B and C subunits.

It catalyses the reaction L-glutamyl-tRNA(Gln) + L-glutamine + ATP + H2O = L-glutaminyl-tRNA(Gln) + L-glutamate + ADP + phosphate + H(+). Allows the formation of correctly charged Gln-tRNA(Gln) through the transamidation of misacylated Glu-tRNA(Gln) in organisms which lack glutaminyl-tRNA synthetase. The reaction takes place in the presence of glutamine and ATP through an activated gamma-phospho-Glu-tRNA(Gln). The chain is Glutamyl-tRNA(Gln) amidotransferase subunit A from Francisella tularensis subsp. novicida (strain U112).